The sequence spans 250 residues: NAD(P)H-quinone oxidoreductase subunit K (250 aa).

[4Fe-4S] cluster-binding residues include Cys60, Cys61, Cys125, and Cys156. The disordered stretch occupies residues 230-250; it reads ELNTPEIDVSPASQSSSTYES. The span at 240–250 shows a compositional bias: polar residues; it reads PASQSSSTYES.

It belongs to the complex I 20 kDa subunit family. As to quaternary structure, NDH-1 can be composed of about 15 different subunits; different subcomplexes with different compositions have been identified which probably have different functions. [4Fe-4S] cluster is required as a cofactor.

Its subcellular location is the cellular thylakoid membrane. The enzyme catalyses a plastoquinone + NADH + (n+1) H(+)(in) = a plastoquinol + NAD(+) + n H(+)(out). It catalyses the reaction a plastoquinone + NADPH + (n+1) H(+)(in) = a plastoquinol + NADP(+) + n H(+)(out). Its function is as follows. NDH-1 shuttles electrons from an unknown electron donor, via FMN and iron-sulfur (Fe-S) centers, to quinones in the respiratory and/or the photosynthetic chain. The immediate electron acceptor for the enzyme in this species is believed to be plastoquinone. Couples the redox reaction to proton translocation, and thus conserves the redox energy in a proton gradient. Cyanobacterial NDH-1 also plays a role in inorganic carbon-concentration. In Prochlorococcus marinus (strain MIT 9313), this protein is NAD(P)H-quinone oxidoreductase subunit K.